A 558-amino-acid chain; its full sequence is Phosphatase and actin regulator 3 (558 aa).

The span at 1–11 shows a compositional bias: polar residues; the sequence is MAASEDGSSCL. 3 disordered regions span residues 1–69, 81–288, and 300–366; these read MAAS…KLAT, KKKN…RPLP, and LATK…ENLM. Positions 18-33 are enriched in low complexity; the sequence is QSDPSFLSDSSATSTD. T69 bears the Phosphothreonine mark. The RPEL 1 repeat unit spans residues 92-117; sequence SALEKKMAGRQGREELIKQGLLEMME. Residues 94-108 show a composition bias toward basic and acidic residues; sequence LEKKMAGRQGREELI. A compositionally biased stretch (polar residues) spans 144–169; the sequence is ETLTSEGAQPGSPSASGTDQVSQDEL. A compositionally biased stretch (pro residues) spans 228 to 239; the sequence is PSPPLLPTPPPK. S229 is modified (phosphoserine). T235 is modified (phosphothreonine). Basic and acidic residues-rich tracts occupy residues 300–341 and 354–363; these read LATK…RDEA and ATKDSEENKE. RPEL repeat units lie at residues 400–425, 438–463, and 476–501; these read ELLA…PRRT, MKLS…KQRN, and QRLT…IRFS. Residues 449 to 485 adopt a coiled-coil conformation; that stretch reads AVEELERRNILKQRNDQTEQEERREIKQRLTRKLNQR.

The protein belongs to the phosphatase and actin regulator family. In terms of assembly, binds PPP1CA and actin; thus inhibiting the protein phosphatase 1 (PP1) activity.

The protein localises to the nucleus matrix. This Mus musculus (Mouse) protein is Phosphatase and actin regulator 3 (Phactr3).